A 394-amino-acid polypeptide reads, in one-letter code: 1-deoxy-D-xylulose 5-phosphate reductoisomerase (394 aa).

NADPH contacts are provided by threonine 12, glycine 13, serine 14, isoleucine 15, glycine 38, and asparagine 126. 1-deoxy-D-xylulose 5-phosphate is bound at residue lysine 127. Position 128 (glutamate 128) interacts with NADPH. Mn(2+) is bound at residue aspartate 151. Serine 152, glutamate 153, serine 177, and histidine 200 together coordinate 1-deoxy-D-xylulose 5-phosphate. Position 153 (glutamate 153) interacts with Mn(2+). Glycine 206 serves as a coordination point for NADPH. The 1-deoxy-D-xylulose 5-phosphate site is built by serine 213, asparagine 218, lysine 219, and glutamate 222. Mn(2+) is bound at residue glutamate 222.

It belongs to the DXR family. Mg(2+) serves as cofactor. It depends on Mn(2+) as a cofactor.

It carries out the reaction 2-C-methyl-D-erythritol 4-phosphate + NADP(+) = 1-deoxy-D-xylulose 5-phosphate + NADPH + H(+). The protein operates within isoprenoid biosynthesis; isopentenyl diphosphate biosynthesis via DXP pathway; isopentenyl diphosphate from 1-deoxy-D-xylulose 5-phosphate: step 1/6. Functionally, catalyzes the NADPH-dependent rearrangement and reduction of 1-deoxy-D-xylulose-5-phosphate (DXP) to 2-C-methyl-D-erythritol 4-phosphate (MEP). This Beutenbergia cavernae (strain ATCC BAA-8 / DSM 12333 / CCUG 43141 / JCM 11478 / NBRC 16432 / NCIMB 13614 / HKI 0122) protein is 1-deoxy-D-xylulose 5-phosphate reductoisomerase.